We begin with the raw amino-acid sequence, 487 residues long: GPI mannosyltransferase 1 (487 aa).

3 helical membrane-spanning segments follow: residues Pro26 to Trp46, Ile87 to Ala107, and Val121 to Gly141. A disordered region spans residues Ser147–Met175. A compositionally biased stretch (basic and acidic residues) spans Lys150–Lys164. The next 7 helical transmembrane spans lie at Leu205 to Ala225, Leu227 to Val247, Leu289 to Leu309, Ile359 to Leu379, Phe393 to Leu413, Met429 to Tyr449, and Gly462 to Val482.

This sequence belongs to the PIGM family.

Its subcellular location is the endoplasmic reticulum membrane. It participates in glycolipid biosynthesis; glycosylphosphatidylinositol-anchor biosynthesis. Its function is as follows. Mannosyltransferase involved in glycosylphosphatidylinositol-anchor biosynthesis. Transfers the first alpha-1,4-mannose to GlcN-acyl-PI during GPI precursor assembly. Required for cell wall integrity. The protein is GPI mannosyltransferase 1 (gim-1) of Neurospora crassa (strain ATCC 24698 / 74-OR23-1A / CBS 708.71 / DSM 1257 / FGSC 987).